The following is a 143-amino-acid chain: Deoxyuridine 5'-triphosphate nucleotidohydrolase (143 aa).

Substrate is bound by residues R63–G65, N76, T80–D82, and K90.

This sequence belongs to the dUTPase family. Mg(2+) is required as a cofactor.

The enzyme catalyses dUTP + H2O = dUMP + diphosphate + H(+). It participates in pyrimidine metabolism; dUMP biosynthesis; dUMP from dCTP (dUTP route): step 2/2. This enzyme is involved in nucleotide metabolism: it produces dUMP, the immediate precursor of thymidine nucleotides and it decreases the intracellular concentration of dUTP so that uracil cannot be incorporated into DNA. This Clostridioides difficile (Peptoclostridium difficile) protein is Deoxyuridine 5'-triphosphate nucleotidohydrolase.